The sequence spans 217 residues: UPF0711 protein C18orf21 homolog (217 aa).

Phosphoserine is present on Ser-126. 2 positions are modified to phosphothreonine: Thr-130 and Thr-139. The segment at 131–190 (AANKASPKTPKRTAPGSANLGQSTNGSKGKSPSLTIRTPTSGQSTPICSSRNGSKRKKHF) is disordered. The span at 149 to 182 (NLGQSTNGSKGKSPSLTIRTPTSGQSTPICSSRN) shows a compositional bias: polar residues.

This sequence belongs to the UPF0711 family.

The polypeptide is UPF0711 protein C18orf21 homolog (Mus musculus (Mouse)).